A 456-amino-acid chain; its full sequence is Phosphomethylpyrimidine synthase (456 aa).

Substrate-binding positions include asparagine 80, methionine 109, tyrosine 139, histidine 175, 195–197, 236–239, and glutamate 275; these read SRG and DSLR. Histidine 279 serves as a coordination point for Zn(2+). Tyrosine 302 serves as a coordination point for substrate. Histidine 343 contributes to the Zn(2+) binding site. [4Fe-4S] cluster contacts are provided by cysteine 423, cysteine 426, and cysteine 431.

It belongs to the ThiC family. Requires [4Fe-4S] cluster as cofactor.

It catalyses the reaction 5-amino-1-(5-phospho-beta-D-ribosyl)imidazole + S-adenosyl-L-methionine = 4-amino-2-methyl-5-(phosphooxymethyl)pyrimidine + CO + 5'-deoxyadenosine + formate + L-methionine + 3 H(+). Its pathway is cofactor biosynthesis; thiamine diphosphate biosynthesis. Its function is as follows. Catalyzes the synthesis of the hydroxymethylpyrimidine phosphate (HMP-P) moiety of thiamine from aminoimidazole ribotide (AIR) in a radical S-adenosyl-L-methionine (SAM)-dependent reaction. The polypeptide is Phosphomethylpyrimidine synthase (Prochlorococcus marinus (strain MIT 9312)).